Consider the following 170-residue polypeptide: MKDIERRILLGRVVGAFGVRGEIKLESWTEPRSAIFRYQPWIVRSPSGVETTIEGVRGRDSGKHLVARFPGVEDRDTVEAMRGTEIYVARSALPPPKPDEYYWVDLEGLDVKTTEGVALGQVSHLFSTGANDVVVVRGDRERMIPFVQPDFVKSVDFEANLVVVDWDPEF.

The PRC barrel domain maps to Lys97–Phe170.

It belongs to the RimM family. Binds ribosomal protein uS19.

Its subcellular location is the cytoplasm. An accessory protein needed during the final step in the assembly of 30S ribosomal subunit, possibly for assembly of the head region. Essential for efficient processing of 16S rRNA. May be needed both before and after RbfA during the maturation of 16S rRNA. It has affinity for free ribosomal 30S subunits but not for 70S ribosomes. The sequence is that of Ribosome maturation factor RimM from Stenotrophomonas maltophilia (strain K279a).